An 847-amino-acid polypeptide reads, in one-letter code: DNA ligase (847 aa).

The segment covering M1 to D22 has biased composition (low complexity). Residues M1–L23 form a disordered region. Residues D54–D58, S104–L105, and E135 each bind NAD(+). Residue K137 is the N6-AMP-lysine intermediate of the active site. Positions 158, 195, 326, and 350 each coordinate NAD(+). Zn(2+)-binding residues include C444, C447, C463, and C469. The 90-residue stretch at A686–D775 folds into the BRCT domain. Residues A770–P847 form a disordered region. 2 stretches are compositionally biased toward low complexity: residues D786–E807 and P819–G833.

This sequence belongs to the NAD-dependent DNA ligase family. LigA subfamily. Mg(2+) is required as a cofactor. Mn(2+) serves as cofactor.

The enzyme catalyses NAD(+) + (deoxyribonucleotide)n-3'-hydroxyl + 5'-phospho-(deoxyribonucleotide)m = (deoxyribonucleotide)n+m + AMP + beta-nicotinamide D-nucleotide.. DNA ligase that catalyzes the formation of phosphodiester linkages between 5'-phosphoryl and 3'-hydroxyl groups in double-stranded DNA using NAD as a coenzyme and as the energy source for the reaction. It is essential for DNA replication and repair of damaged DNA. In Clavibacter sepedonicus (Clavibacter michiganensis subsp. sepedonicus), this protein is DNA ligase.